Consider the following 375-residue polypeptide: POU domain, class 3, transcription factor 1-B (375 aa).

3 disordered regions span residues 1-29, 56-139, and 151-200; these read MAAT…RMHQ, MSLT…QPLI, and MLGP…PSSD. Polar residues-rich tracts occupy residues 107–117, 129–139, and 151–160; these read VHQQTPSSHAW, SPGSNSHQPLI, and MLGPQASSLH. Over residues 162–178 the composition is skewed to basic and acidic residues; the sequence is SMRDPLHDDPGVHDTHV. The 75-residue stretch at 194-268 folds into the POU-specific domain; that stretch reads EDAPSSDDLE…LLNKWLEETD (75 aa). Residues 286 to 345 constitute a DNA-binding region (homeobox); it reads KRKKRTSIEVGVKGALENHFLKCPKPSAHEITSLADSLQLEKEVVRVWFCNRRQKEKRMT.

This sequence belongs to the POU transcription factor family. Class-3 subfamily.

It is found in the nucleus. Functionally, acts as a transcription factor. May play a role in neuronal differentiation. In Xenopus laevis (African clawed frog), this protein is POU domain, class 3, transcription factor 1-B (pou3f1-b).